A 372-amino-acid polypeptide reads, in one-letter code: MKSFLLSRQAIHRISLLSSKTPTFCRNFSAITSTISHSDRHLRSYDEQTPFQNVEIPRPISSFNRYFHFTRESRLSESSAAIDDSNDQEEDDEDGTTNEFLSRFVWIMRGKVSEAYPDCDKKMIDGMLLLIVEKVVEEIERGGFNKVGSAPPSPSSEFSDDLWATIWEVSNTVLKDMEKERKKEKMKQYVQSPEVMEMCRFAGEIGIRGDLLRELRFKWAREKMDDAEFYESLEQQRDLDNSIRESETVDGEVEEEGFVPSDEVESRSISLPKRKGKLKYKIYGLELSDPKWVEMADKIHEAEEEADWREPKPVTGKCKLVMEKLESLQEGDDPSGLLAEWAELLEPNRVDWIALINQLREGNTHAYLKVRL.

The N-terminal 28 residues, 1 to 28 (MKSFLLSRQAIHRISLLSSKTPTFCRNF), are a transit peptide targeting the mitochondrion. The disordered stretch occupies residues 240–265 (DNSIRESETVDGEVEEEGFVPSDEVE). Residues 248 to 257 (TVDGEVEEEG) show a composition bias toward acidic residues.

In terms of assembly, component of the mitochondrial ribosome small subunit.

Its subcellular location is the mitochondrion. In terms of biological role, required for karyogamy during female gametophyte development, when the two polar nuclei fuse to form the diploid central cell nucleus. This chain is Small ribosomal subunit protein mS77 (rPPR2), found in Arabidopsis thaliana (Mouse-ear cress).